Consider the following 956-residue polypeptide: UvrABC system protein A (956 aa).

33–40 (GLSGSGKS) lines the ATP pocket. The C4-type zinc-finger motif lies at 252–279 (CPYCGFSVGELEPRMFSFNSPFGACPTC). ABC transporter domains lie at 309–587 (WRPI…KNSI) and 607–936 (GNGL…KYLK). 639–646 (GVSGSGKS) is a binding site for ATP. Residues 738-764 (CEACKGDGIIKIEMHFLPDVYVPCEVC) form a C4-type zinc finger.

The protein belongs to the ABC transporter superfamily. UvrA family. As to quaternary structure, forms a heterotetramer with UvrB during the search for lesions.

The protein resides in the cytoplasm. Its function is as follows. The UvrABC repair system catalyzes the recognition and processing of DNA lesions. UvrA is an ATPase and a DNA-binding protein. A damage recognition complex composed of 2 UvrA and 2 UvrB subunits scans DNA for abnormalities. When the presence of a lesion has been verified by UvrB, the UvrA molecules dissociate. The polypeptide is UvrABC system protein A (Listeria monocytogenes serovar 1/2a (strain ATCC BAA-679 / EGD-e)).